The following is a 348-amino-acid chain: Phosphate acyltransferase (348 aa).

Belongs to the PlsX family. In terms of assembly, homodimer. Probably interacts with PlsY.

It is found in the cytoplasm. It carries out the reaction a fatty acyl-[ACP] + phosphate = an acyl phosphate + holo-[ACP]. It functions in the pathway lipid metabolism; phospholipid metabolism. Its function is as follows. Catalyzes the reversible formation of acyl-phosphate (acyl-PO(4)) from acyl-[acyl-carrier-protein] (acyl-ACP). This enzyme utilizes acyl-ACP as fatty acyl donor, but not acyl-CoA. This is Phosphate acyltransferase from Francisella tularensis subsp. novicida (strain U112).